Reading from the N-terminus, the 379-residue chain is MANASEPGGGGSGGGAEAAALGLRLATLSLLLCVSLAGNVLFALLIVRERSLHRAPYYLLLDLCLADGLRALACLPAVMLAARRAAAAAGTPPGALGCKLLAFLAALFCFHAAFLLLGVGVTRYLAIAHHRFYAERLAGWPCAAMLVCAAWALALAAAFPPVLDGGGADDEDAPCALEQRPDGAPGALGFLLLLAAVVGATHLVYLRLLFFIHDRRKMRPARLVPAVSHDWTFHGPGATGQAAANWTAGFGRGPTPPALVGIRPAGPGRGARRLLVLEEFKTEKRLCKMFYAITLLFLLLWGPYVVASYLRVLVRPGAVPQAYLTASVWLTFAQAGINPVVCFLFNRELRDCFRAQFPCCQSPQATQATLPCDLKGIGL.

Residues 1-26 (MANASEPGGGGSGGGAEAAALGLRLA) are Extracellular-facing. N-linked (GlcNAc...) asparagine glycosylation occurs at Asn3. Residues 27-47 (TLSLLLCVSLAGNVLFALLIV) traverse the membrane as a helical segment. The Cytoplasmic segment spans residues 48–58 (RERSLHRAPYY). Residues 59–79 (LLLDLCLADGLRALACLPAVM) form a helical membrane-spanning segment. At 80–100 (LAARRAAAAAGTPPGALGCKL) the chain is on the extracellular side. Cys98 and Cys175 form a disulfide bridge. The chain crosses the membrane as a helical span at residues 101-121 (LAFLAALFCFHAAFLLLGVGV). At 122–142 (TRYLAIAHHRFYAERLAGWPC) the chain is on the cytoplasmic side. A helical transmembrane segment spans residues 143–163 (AAMLVCAAWALALAAAFPPVL). The Extracellular segment spans residues 164 to 185 (DGGGADDEDAPCALEQRPDGAP). Residues 186-206 (GALGFLLLLAAVVGATHLVYL) form a helical membrane-spanning segment. Topologically, residues 207 to 289 (RLLFFIHDRR…FKTEKRLCKM (83 aa)) are cytoplasmic. A helical membrane pass occupies residues 290 to 310 (FYAITLLFLLLWGPYVVASYL). Residues 311 to 324 (RVLVRPGAVPQAYL) are Extracellular-facing. The helical transmembrane segment at 325–345 (TASVWLTFAQAGINPVVCFLF) threads the bilayer. Over 346-379 (NRELRDCFRAQFPCCQSPQATQATLPCDLKGIGL) the chain is Cytoplasmic.

It belongs to the G-protein coupled receptor 1 family.

Its subcellular location is the cell membrane. In terms of biological role, orphan receptor. Possible candidate for amine-like G-protein coupled receptor. The polypeptide is Probable G-protein coupled receptor 27 (Gpr27) (Mus musculus (Mouse)).